Consider the following 317-residue polypeptide: Acetyl-coenzyme A carboxylase carboxyl transferase subunit alpha (317 aa).

In terms of domain architecture, CoA carboxyltransferase C-terminal spans 39 to 293; that stretch reads KLEAKAQKAL…KEAVVEALGA (255 aa).

It belongs to the AccA family. Acetyl-CoA carboxylase is a heterohexamer composed of biotin carboxyl carrier protein (AccB), biotin carboxylase (AccC) and two subunits each of ACCase subunit alpha (AccA) and ACCase subunit beta (AccD).

It is found in the cytoplasm. It carries out the reaction N(6)-carboxybiotinyl-L-lysyl-[protein] + acetyl-CoA = N(6)-biotinyl-L-lysyl-[protein] + malonyl-CoA. It participates in lipid metabolism; malonyl-CoA biosynthesis; malonyl-CoA from acetyl-CoA: step 1/1. Functionally, component of the acetyl coenzyme A carboxylase (ACC) complex. First, biotin carboxylase catalyzes the carboxylation of biotin on its carrier protein (BCCP) and then the CO(2) group is transferred by the carboxyltransferase to acetyl-CoA to form malonyl-CoA. The polypeptide is Acetyl-coenzyme A carboxylase carboxyl transferase subunit alpha (Beijerinckia indica subsp. indica (strain ATCC 9039 / DSM 1715 / NCIMB 8712)).